Here is a 90-residue protein sequence, read N- to C-terminus: MNKSQLIDKIAAGADISKAAAGRALDAIIASVTESLKEGDDVALVGFGTFAVKERAARTGRNPQTGKEITIAAAKVPSFRAGKALKDAVN.

Belongs to the bacterial histone-like protein family. In terms of assembly, heterodimer of an alpha and a beta chain.

Functionally, histone-like DNA-binding protein which is capable of wrapping DNA to stabilize it, and thus to prevent its denaturation under extreme environmental conditions. In Escherichia coli O6:H1 (strain CFT073 / ATCC 700928 / UPEC), this protein is DNA-binding protein HU-beta (hupB).